Consider the following 490-residue polypeptide: Lipoprotein lipase (490 aa).

The N-terminal stretch at 1-25 is a signal peptide; that stretch reads MERGRGMGKTALLAVLCLCLRGAAG. An interaction with GPIHBP1 region spans residues 32 to 53; the sequence is MNFEGIESKFSLRTPAEPDEDV. Cysteine 54 and cysteine 67 are joined by a disulfide. Asparagine 70 is a glycosylation site (N-linked (GlcNAc...) (complex) asparagine). Tyrosine 121 bears the 3'-nitrotyrosine mark. The active-site Nucleophile is serine 159. Aspartate 183 acts as the Charge relay system in catalysis. Residue tyrosine 191 is modified to 3'-nitrotyrosine. Ca(2+)-binding residues include alanine 194, arginine 197, serine 199, and aspartate 202. An intrachain disulfide couples cysteine 243 to cysteine 266. Residues 243-266 are essential for determining substrate specificity; the sequence is CNLGEALRLIAEKGFSDVDQLVKC. Histidine 268 serves as the catalytic Charge relay system. Intrachain disulfides connect cysteine 291–cysteine 310 and cysteine 302–cysteine 305. Residues 341-464 enclose the PLAT domain; the sequence is FHYQVKIHFF…KGEEAAIFVK (124 aa). 3'-nitrotyrosine is present on tyrosine 343. N-linked (GlcNAc...) asparagine glycans are attached at residues asparagine 354 and asparagine 386. An important for interaction with lipoprotein particles region spans residues 417–421; it reads WSDWW. Residues 430–434 are important for heparin binding; that stretch reads RVRVK. 430 to 441 serves as a coordination point for heparin; it reads RVRVKSGETQKK. The interval 443 to 467 is interaction with GPIHBP1; it reads VFCSRDGSSRLGKGEEAAIFVKCLE. Cysteine 445 and cysteine 465 are disulfide-bonded. Residues 471 to 490 are disordered; it reads SRKRGGAKKASKENSAHESA. Residues 480–490 are compositionally biased toward basic and acidic residues; it reads ASKENSAHESA.

Belongs to the AB hydrolase superfamily. Lipase family. As to quaternary structure, homodimer. Interacts with GPIHBP1 with 1:1 stoichiometry. Interacts with APOC2; the interaction activates LPL activity in the presence of lipids. Interaction with heparan sulfate proteoglycans is required to protect LPL against loss of activity. Associates with lipoprotein particles in blood plasma. Interacts with LMF1 and SEL1L; interaction with SEL1L is required to prevent aggregation of newly synthesized LPL in the endoplasmic reticulum (ER), and for normal export of LPL from the ER to the extracellular space. In terms of processing, N-glycan at Asn-70 is a triantennary complex oligosaccharide containing sialic acid, galactose, mannose, and N-acetylglucosamine, the reducing GlcNAc being sulfated at C6. Tyrosine nitration after lipopolysaccharide (LPS) challenge down-regulates the lipase activity.

Its subcellular location is the cell membrane. The protein resides in the secreted. The protein localises to the extracellular space. It localises to the extracellular matrix. The catalysed reaction is a triacylglycerol + H2O = a diacylglycerol + a fatty acid + H(+). It carries out the reaction a 1,2-diacyl-sn-glycero-3-phosphocholine + H2O = a 2-acyl-sn-glycero-3-phosphocholine + a fatty acid + H(+). The enzyme catalyses 1,2,3-tri-(9Z-octadecenoyl)-glycerol + H2O = di-(9Z)-octadecenoylglycerol + (9Z)-octadecenoate + H(+). It catalyses the reaction 1,2-di-(9Z-octadecenoyl)-sn-glycero-3-phosphocholine + H2O = (9Z-octadecenoyl)-sn-glycero-3-phosphocholine + (9Z)-octadecenoate + H(+). The catalysed reaction is 1,2,3-tributanoylglycerol + H2O = dibutanoylglycerol + butanoate + H(+). It carries out the reaction 1,2-dihexadecanoyl-sn-glycero-3-phosphocholine + H2O = hexadecanoyl-sn-glycero-3-phosphocholine + hexadecanoate + H(+). With respect to regulation, ca(2+) binding promotes protein stability and formation of the active homodimer. Key enzyme in triglyceride metabolism. Catalyzes the hydrolysis of triglycerides from circulating chylomicrons and very low density lipoproteins (VLDL), and thereby plays an important role in lipid clearance from the blood stream, lipid utilization and storage. Although it has both phospholipase and triglyceride lipase activities it is primarily a triglyceride lipase with low but detectable phospholipase activity. Mediates margination of triglyceride-rich lipoprotein particles in capillaries. Recruited to its site of action on the luminal surface of vascular endothelium by binding to GPIHBP1 and cell surface heparan sulfate proteoglycans. The polypeptide is Lipoprotein lipase (LPL) (Gallus gallus (Chicken)).